The primary structure comprises 984 residues: uncharacterized protein (984 aa).

The tract at residues 941 to 984 (FGPSGPGPNQGPGDDYNNFKSTKYPRNGYNKYQPNNRIHSRNRY) is disordered.

It localises to the virion. This is an uncharacterized protein from Acanthamoeba polyphaga (Amoeba).